The chain runs to 1485 residues: Chromosome partition protein MukB (1485 aa).

34 to 41 (GGNGAGKS) lines the ATP pocket. 2 coiled-coil regions span residues 337 to 480 (LNLV…QAYQ) and 509 to 605 (QHLA…PVWL). Residues 666-783 (PSGAEDARLI…EVPLFGRAAR (118 aa)) are flexible hinge. 2 coiled-coil regions span residues 835-915 (EAEI…IQQH) and 977-1116 (GMLT…AKAG).

Belongs to the SMC family. MukB subfamily. In terms of assembly, homodimerization via its hinge domain. Binds to DNA via its C-terminal region. Interacts, and probably forms a ternary complex, with MukE and MukF via its C-terminal region. The complex formation is stimulated by calcium or magnesium. Interacts with tubulin-related protein FtsZ.

Its subcellular location is the cytoplasm. It is found in the nucleoid. In terms of biological role, plays a central role in chromosome condensation, segregation and cell cycle progression. Functions as a homodimer, which is essential for chromosome partition. Involved in negative DNA supercoiling in vivo, and by this means organize and compact chromosomes. May achieve or facilitate chromosome segregation by condensation DNA from both sides of a centrally located replisome during cell division. The protein is Chromosome partition protein MukB of Yersinia pseudotuberculosis serotype O:3 (strain YPIII).